The following is a 469-amino-acid chain: UDP-N-acetylmuramate--L-alanine ligase (469 aa).

ATP is bound at residue 112 to 118 (GTHGKTT).

Belongs to the MurCDEF family.

Its subcellular location is the cytoplasm. The catalysed reaction is UDP-N-acetyl-alpha-D-muramate + L-alanine + ATP = UDP-N-acetyl-alpha-D-muramoyl-L-alanine + ADP + phosphate + H(+). The protein operates within cell wall biogenesis; peptidoglycan biosynthesis. Cell wall formation. This Laribacter hongkongensis (strain HLHK9) protein is UDP-N-acetylmuramate--L-alanine ligase.